The following is a 342-amino-acid chain: Ketol-acid reductoisomerase (NADP(+)) (342 aa).

Residues 2 to 182 form the KARI N-terminal Rossmann domain; the sequence is AKIYYDDDAD…GGLRAGGIET (181 aa). Residues 25–28, Arg-48, Ser-51, Ser-53, and 83–86 contribute to the NADP(+) site; these read YGSQ and DQNQ. Residue His-108 is part of the active site. Gly-134 lines the NADP(+) pocket. The KARI C-terminal knotted domain occupies 183 to 328; the sequence is SFREETETDL…KELRKMYSWL (146 aa). Asp-191, Glu-195, Glu-227, and Glu-231 together coordinate Mg(2+). Residue Ser-252 coordinates substrate.

Belongs to the ketol-acid reductoisomerase family. Requires Mg(2+) as cofactor.

The enzyme catalyses (2R)-2,3-dihydroxy-3-methylbutanoate + NADP(+) = (2S)-2-acetolactate + NADPH + H(+). The catalysed reaction is (2R,3R)-2,3-dihydroxy-3-methylpentanoate + NADP(+) = (S)-2-ethyl-2-hydroxy-3-oxobutanoate + NADPH + H(+). It functions in the pathway amino-acid biosynthesis; L-isoleucine biosynthesis; L-isoleucine from 2-oxobutanoate: step 2/4. Its pathway is amino-acid biosynthesis; L-valine biosynthesis; L-valine from pyruvate: step 2/4. Its function is as follows. Involved in the biosynthesis of branched-chain amino acids (BCAA). Catalyzes an alkyl-migration followed by a ketol-acid reduction of (S)-2-acetolactate (S2AL) to yield (R)-2,3-dihydroxy-isovalerate. In the isomerase reaction, S2AL is rearranged via a Mg-dependent methyl migration to produce 3-hydroxy-3-methyl-2-ketobutyrate (HMKB). In the reductase reaction, this 2-ketoacid undergoes a metal-dependent reduction by NADPH to yield (R)-2,3-dihydroxy-isovalerate. The chain is Ketol-acid reductoisomerase (NADP(+)) from Cutibacterium acnes (strain DSM 16379 / KPA171202) (Propionibacterium acnes).